A 209-amino-acid chain; its full sequence is Large ribosomal subunit protein uL3 (209 aa).

The disordered stretch occupies residues 127 to 166 (NFGGGSRTHGQSDRLRAPGSVGGSSDPSRTFKGTRMAGRM).

This sequence belongs to the universal ribosomal protein uL3 family. In terms of assembly, part of the 50S ribosomal subunit. Forms a cluster with proteins L14 and L19.

Its function is as follows. One of the primary rRNA binding proteins, it binds directly near the 3'-end of the 23S rRNA, where it nucleates assembly of the 50S subunit. In Chlorobaculum tepidum (strain ATCC 49652 / DSM 12025 / NBRC 103806 / TLS) (Chlorobium tepidum), this protein is Large ribosomal subunit protein uL3.